The following is a 180-amino-acid chain: Bifunctional protein PyrR (180 aa).

The short motif at 101 to 113 (VILVDDVLYTGRT) is the PRPP-binding element.

The protein belongs to the purine/pyrimidine phosphoribosyltransferase family. PyrR subfamily. Homodimer and homohexamer; in equilibrium.

It carries out the reaction UMP + diphosphate = 5-phospho-alpha-D-ribose 1-diphosphate + uracil. Functionally, regulates transcriptional attenuation of the pyrimidine nucleotide (pyr) operon by binding in a uridine-dependent manner to specific sites on pyr mRNA. This disrupts an antiterminator hairpin in the RNA and favors formation of a downstream transcription terminator, leading to a reduced expression of downstream genes. Also displays a weak uracil phosphoribosyltransferase activity which is not physiologically significant. This is Bifunctional protein PyrR from Bacillus cereus (strain ATCC 14579 / DSM 31 / CCUG 7414 / JCM 2152 / NBRC 15305 / NCIMB 9373 / NCTC 2599 / NRRL B-3711).